We begin with the raw amino-acid sequence, 787 residues long: Filamentous growth regulator 27 (787 aa).

Residues 1–22 are disordered; sequence MSAPIVETKKASKRRIRRIPDD. Positions 31–57 form a DNA-binding region, zn(2)-C6 fungal-type; that stretch reads CDNCKKRKFKCSGEKPCFECSKKGHDC. The stretch at 69-97 forms a coiled coil; that stretch reads GERMAKLKQKKDNNEKQRELVNEQIAQSS. 2 disordered regions span residues 120–140 and 200–221; these read SSHS…SSIP and RHKS…KGGI. Residues 209 to 221 are compositionally biased toward polar residues; it reads DNNTNNVPKKGGI.

It localises to the nucleus. In terms of biological role, transcription factor involved in yeast cell adherence to silicone substrate, filamentous growth, and biofilm formation. This is Filamentous growth regulator 27 (FGR27) from Candida albicans (strain SC5314 / ATCC MYA-2876) (Yeast).